We begin with the raw amino-acid sequence, 1426 residues long: Homeobox protein cut-like 2 (1426 aa).

Residues Pro77 to Gly104 form a disordered region. Ser81 carries the phosphoserine modification. A coiled-coil region spans residues Ile131 to Ala311. Disordered stretches follow at residues Ala351–Leu419, Lys460–Glu488, Glu599–Glu628, Glu653–Gln676, Tyr743–Asp769, and Leu904–Gln977. Positions Pro374–Ala395 are enriched in pro residues. Composition is skewed to low complexity over residues Pro397–Pro408 and Lys460–Pro470. The segment at residues Asp482–Arg569 is a DNA-binding region (CUT 1). The stretch at Asp587–Gly655 forms a coiled coil. Over residues Ser608–Glu628 the composition is skewed to polar residues. Low complexity-rich tracts occupy residues Tyr743–Ser757, Gln910–Ser928, and Ser965–Ser976. The segment at residues Gln828–Gln915 is a DNA-binding region (CUT 2). A DNA-binding region (CUT 3) is located at residues Gln983–Leu1070. Positions Ala1113–Met1172 form a DNA-binding region, homeobox. Residues Thr1177–Asn1392 are disordered. 2 stretches are compositionally biased toward basic and acidic residues: residues Ala1233–Glu1245 and Asp1260–His1274. Over residues Leu1318–Glu1332 the composition is skewed to low complexity. A compositionally biased stretch (polar residues) spans Pro1338 to Val1350. A compositionally biased stretch (low complexity) spans Ser1351–Leu1364.

Belongs to the CUT homeobox family. Restricted to neural tissues. Expressed exclusively in the central and peripheral nervous systems.

It is found in the nucleus. In terms of biological role, transcription factor involved in the control of neuronal proliferation and differentiation in the brain. Regulates dendrite development and branching, dendritic spine formation, and synaptogenesis in cortical layers II-III. Binds to DNA in a sequence-specific manner. In Mus musculus (Mouse), this protein is Homeobox protein cut-like 2 (Cux2).